Consider the following 137-residue polypeptide: MRILWIVAVCLIGVEGNLYQFGKMIFKMTRKSALSYSDYGCYCGWGGKGKPQDATDRCCFVHDCCYGTVNGCDPKLSTYSYSFQNGDIVCGGDDPCLRAVCECDRVAAICFGENMNTYDTKYMLHSLFDCMEESEKC.

The first 16 residues, methionine 1–glycine 16, serve as a signal peptide directing secretion. 7 disulfide bridges follow: cysteine 41/cysteine 130, cysteine 43/cysteine 59, cysteine 58/cysteine 110, cysteine 64/cysteine 137, cysteine 65/cysteine 103, cysteine 72/cysteine 96, and cysteine 90/cysteine 101. The Ca(2+) site is built by tyrosine 42, glycine 44, and glycine 46. Histidine 62 is a catalytic residue. Aspartate 63 serves as a coordination point for Ca(2+). Aspartate 104 is a catalytic residue.

Belongs to the phospholipase A2 family. Group II subfamily. D49 sub-subfamily. As to quaternary structure, does not form a complex. It depends on Ca(2+) as a cofactor. In terms of tissue distribution, expressed by the venom gland.

The protein resides in the secreted. It catalyses the reaction a 1,2-diacyl-sn-glycero-3-phosphocholine + H2O = a 1-acyl-sn-glycero-3-phosphocholine + a fatty acid + H(+). Its function is as follows. Snake venom phospholipase A2 (PLA2) that is not toxic by itself, but the synergistical mixture of a basic and this acidic protein is lethal. PLA2 catalyzes the calcium-dependent hydrolysis of the 2-acyl groups in 3-sn-phosphoglycerides. The chain is Acidic phospholipase A2 VP8 from Daboia palaestinae (Palestine viper).